The sequence spans 582 residues: 5-aminolevulinate synthase, erythroid-specific, mitochondrial (582 aa).

Arg-158 serves as a coordination point for succinyl-CoA. 2 residues coordinate pyridoxal 5'-phosphate: Cys-253 and Phe-254. Succinyl-CoA-binding residues include Ser-275 and Arg-294. Positions 327, 355, and 383 each coordinate pyridoxal 5'-phosphate. Residue Lys-386 is part of the active site. Lys-386 carries the post-translational modification N6-(pyridoxal phosphate)lysine. Residues Thr-415 and Thr-416 each contribute to the pyridoxal 5'-phosphate site. Thr-503 provides a ligand contact to succinyl-CoA.

Belongs to the class-II pyridoxal-phosphate-dependent aminotransferase family. As to quaternary structure, homodimer. Pyridoxal 5'-phosphate is required as a cofactor.

Its subcellular location is the mitochondrion inner membrane. It carries out the reaction succinyl-CoA + glycine + H(+) = 5-aminolevulinate + CO2 + CoA. It functions in the pathway porphyrin-containing compound metabolism; protoporphyrin-IX biosynthesis; 5-aminolevulinate from glycine: step 1/1. Catalyzes the pyridoxal 5'-phosphate (PLP)-dependent condensation of succinyl-CoA and glycine to form aminolevulinic acid (ALA), with CoA and CO2 as by-products. Contributes significantly to heme formation during erythropoiesis. This Opsanus tau (Oyster toadfish) protein is 5-aminolevulinate synthase, erythroid-specific, mitochondrial (alas2).